The sequence spans 104 residues: Nucleoid-associated protein LSL_1227 (104 aa).

Residues 1–19 (MMMRGMNMQSMMKQMQKLQ) show a composition bias toward low complexity. A disordered region spans residues 1-24 (MMMRGMNMQSMMKQMQKLQKNMKK).

Belongs to the YbaB/EbfC family. Homodimer.

The protein localises to the cytoplasm. It localises to the nucleoid. Its function is as follows. Binds to DNA and alters its conformation. May be involved in regulation of gene expression, nucleoid organization and DNA protection. This chain is Nucleoid-associated protein LSL_1227, found in Ligilactobacillus salivarius (strain UCC118) (Lactobacillus salivarius).